Here is a 169-residue protein sequence, read N- to C-terminus: CKLF-like MARVEL transmembrane domain-containing protein 1 (169 aa).

One can recognise an MARVEL domain in the interval 17-135 (NLKQPETAAA…DAFVVTTKMR (119 aa)). The next 4 membrane-spanning stretches (helical) occupy residues 22–42 (ETAA…ITQA), 46–66 (FITI…IYVL), 79–99 (LLDL…AILA), and 110–130 (YVGG…AFVV).

The protein belongs to the chemokine-like factor family. In terms of tissue distribution, highly expressed in testis.

Its subcellular location is the membrane. This is CKLF-like MARVEL transmembrane domain-containing protein 1 (CMTM1) from Homo sapiens (Human).